The sequence spans 220 residues: Large ribosomal subunit protein uL3 (220 aa).

The segment at 61–81 (KGSKSNKYANKPAEGHAKKAD) is disordered.

It belongs to the universal ribosomal protein uL3 family. In terms of assembly, part of the 50S ribosomal subunit. Forms a cluster with proteins L14 and L19.

One of the primary rRNA binding proteins, it binds directly near the 3'-end of the 23S rRNA, where it nucleates assembly of the 50S subunit. The polypeptide is Large ribosomal subunit protein uL3 (Staphylococcus epidermidis (strain ATCC 12228 / FDA PCI 1200)).